Reading from the N-terminus, the 140-residue chain is 3-hydroxyacyl-[acyl-carrier-protein] dehydratase FabZ (140 aa).

Residue H48 is part of the active site.

The protein belongs to the thioester dehydratase family. FabZ subfamily.

The protein resides in the cytoplasm. It catalyses the reaction a (3R)-hydroxyacyl-[ACP] = a (2E)-enoyl-[ACP] + H2O. Functionally, involved in unsaturated fatty acids biosynthesis. Catalyzes the dehydration of short chain beta-hydroxyacyl-ACPs and long chain saturated and unsaturated beta-hydroxyacyl-ACPs. The chain is 3-hydroxyacyl-[acyl-carrier-protein] dehydratase FabZ from Exiguobacterium sibiricum (strain DSM 17290 / CCUG 55495 / CIP 109462 / JCM 13490 / 255-15).